The primary structure comprises 368 residues: 3-dehydroquinate synthase (368 aa).

NAD(+)-binding positions include 71–76 (DGEAFK), 105–109 (GVVGD), 129–130 (TT), lysine 142, lysine 151, and 169–172 (TLRT). Zn(2+) is bound by residues glutamate 184, histidine 247, and histidine 264.

Belongs to the sugar phosphate cyclases superfamily. Dehydroquinate synthase family. The cofactor is Co(2+). Zn(2+) is required as a cofactor. Requires NAD(+) as cofactor.

It localises to the cytoplasm. The enzyme catalyses 7-phospho-2-dehydro-3-deoxy-D-arabino-heptonate = 3-dehydroquinate + phosphate. Its pathway is metabolic intermediate biosynthesis; chorismate biosynthesis; chorismate from D-erythrose 4-phosphate and phosphoenolpyruvate: step 2/7. Its function is as follows. Catalyzes the conversion of 3-deoxy-D-arabino-heptulosonate 7-phosphate (DAHP) to dehydroquinate (DHQ). In Cupriavidus taiwanensis (strain DSM 17343 / BCRC 17206 / CCUG 44338 / CIP 107171 / LMG 19424 / R1) (Ralstonia taiwanensis (strain LMG 19424)), this protein is 3-dehydroquinate synthase.